The primary structure comprises 249 residues: DNA polymerase sliding clamp (249 aa).

Belongs to the PCNA family. Homotrimer which circularizes head-to-tail (head is a N-terminus, tail is at C-terminus) to form a toroid. RFC opens the toroid so it can load on DNA. Interacts with both Pol I (pol) and Pol II (polB-polC), with Hel308 (hjm) and with Hjc. Interaction with the C-terminal PIP-box of RfcL may stabilize the toroidal structure.

In terms of biological role, sliding clamp subunit that acts as a moving platform for DNA processing. Responsible for tethering the catalytic subunit of DNA polymerase to DNA during high-speed replication. Unlike its eukaryotic paralog, loads on circular DNA without the replication factor C (RFC) clamp loader, although RFC greatly increases loading efficiency. Stimulates the ATPase activity of replication factor C (RFC) in the presence of ssDNA. Stimulates the helicase activity of Hel308 and may alter its substrate specificity. The polypeptide is DNA polymerase sliding clamp (Pyrococcus furiosus (strain ATCC 43587 / DSM 3638 / JCM 8422 / Vc1)).